The following is a 426-amino-acid chain: Enolase (426 aa).

Q165 is a (2R)-2-phosphoglycerate binding site. Catalysis depends on E209, which acts as the Proton donor. Residues D244, E287, and D313 each contribute to the Mg(2+) site. Residues K338, R367, S368, and K389 each contribute to the (2R)-2-phosphoglycerate site. K338 acts as the Proton acceptor in catalysis.

Belongs to the enolase family. Mg(2+) serves as cofactor.

Its subcellular location is the cytoplasm. It localises to the secreted. The protein localises to the cell surface. The enzyme catalyses (2R)-2-phosphoglycerate = phosphoenolpyruvate + H2O. It functions in the pathway carbohydrate degradation; glycolysis; pyruvate from D-glyceraldehyde 3-phosphate: step 4/5. In terms of biological role, catalyzes the reversible conversion of 2-phosphoglycerate (2-PG) into phosphoenolpyruvate (PEP). It is essential for the degradation of carbohydrates via glycolysis. The protein is Enolase of Methanococcus maripaludis (strain C5 / ATCC BAA-1333).